We begin with the raw amino-acid sequence, 514 residues long: MNIQEEIKKRRTFAIISHPDAGKTTITEQLLYFGGEIREAGTVKGKKTGTFAKSDWMDIEKQRGISVTSSVMQFDYDGKRVNILDTPGHEDFSEDTYRTLMAVDAAVMVVDSAKGIEAQTKKLFEVVKHRGIPVFTFMNKLDRDGREPLDLLQELEEILGIASYPMNWPIGMGKAFEGLYDLYNQRLELYKGDERFASLEDGDKLFGSNPFYEQVKDDIELLNEAGNEFSEEAILAGELTPVFFGSALTNFGVQTFLEIFLKFAPEPHGHKKTDGEIVDPYDKDFSGFVFKIQANMDPRHRDRIAFVRIVSGEFERGMSVNLPRTGKGAKLSNVTQFMAESRENVINAVAGDIIGVYDTGTYQVGDTLTVGKNKFEFEPLPTFTPEIFMKVSAKNVMKQKSFHKGIEQLVQEGAVQLYKNYQTGEYMLGAVGQLQFEVFKHRMEGEYNAEVVMSPMGKKTVRWIKPEDLDERMSSSRNILAKDRFDQPVFLFENDFALRWFADKYPDVELEEKM.

A tr-type G domain is found at 8-268; it reads KKRRTFAIIS…IFLKFAPEPH (261 aa). Residues 17–24, 85–89, and 139–142 contribute to the GTP site; these read SHPDAGKT, DTPGH, and NKLD.

This sequence belongs to the TRAFAC class translation factor GTPase superfamily. Classic translation factor GTPase family. PrfC subfamily.

It is found in the cytoplasm. In terms of biological role, increases the formation of ribosomal termination complexes and stimulates activities of RF-1 and RF-2. It binds guanine nucleotides and has strong preference for UGA stop codons. It may interact directly with the ribosome. The stimulation of RF-1 and RF-2 is significantly reduced by GTP and GDP, but not by GMP. This chain is Peptide chain release factor 3, found in Streptococcus pneumoniae serotype 2 (strain D39 / NCTC 7466).